Reading from the N-terminus, the 176-residue chain is Peptidyl-prolyl cis-trans isomerase cyp6 (176 aa).

The region spanning 10–173 (FFDIAVNGQH…AKIEITDCGE (164 aa)) is the PPIase cyclophilin-type domain.

Belongs to the cyclophilin-type PPIase family.

It carries out the reaction [protein]-peptidylproline (omega=180) = [protein]-peptidylproline (omega=0). PPIases accelerate the folding of proteins. It catalyzes the cis-trans isomerization of proline imidic peptide bonds in oligopeptides. This Rhizopus delemar (strain RA 99-880 / ATCC MYA-4621 / FGSC 9543 / NRRL 43880) (Mucormycosis agent) protein is Peptidyl-prolyl cis-trans isomerase cyp6 (cyp6).